Here is a 631-residue protein sequence, read N- to C-terminus: Phosphomethylpyrimidine synthase (631 aa).

Residues N239, M268, Y297, H333, 353–355, 394–397, and E433 contribute to the substrate site; these read SRG and DGLR. H437 is a binding site for Zn(2+). Y460 is a substrate binding site. H501 serves as a coordination point for Zn(2+). Residues C581, C584, and C589 each contribute to the [4Fe-4S] cluster site.

This sequence belongs to the ThiC family. In terms of assembly, homodimer. The cofactor is [4Fe-4S] cluster.

The enzyme catalyses 5-amino-1-(5-phospho-beta-D-ribosyl)imidazole + S-adenosyl-L-methionine = 4-amino-2-methyl-5-(phosphooxymethyl)pyrimidine + CO + 5'-deoxyadenosine + formate + L-methionine + 3 H(+). It functions in the pathway cofactor biosynthesis; thiamine diphosphate biosynthesis. Functionally, catalyzes the synthesis of the hydroxymethylpyrimidine phosphate (HMP-P) moiety of thiamine from aminoimidazole ribotide (AIR) in a radical S-adenosyl-L-methionine (SAM)-dependent reaction. This Salmonella schwarzengrund (strain CVM19633) protein is Phosphomethylpyrimidine synthase.